The sequence spans 233 residues: Large ribosomal subunit protein uL1 (233 aa).

The protein belongs to the universal ribosomal protein uL1 family. As to quaternary structure, part of the 50S ribosomal subunit.

Binds directly to 23S rRNA. The L1 stalk is quite mobile in the ribosome, and is involved in E site tRNA release. Its function is as follows. Protein L1 is also a translational repressor protein, it controls the translation of the L11 operon by binding to its mRNA. This chain is Large ribosomal subunit protein uL1, found in Proteus vulgaris.